We begin with the raw amino-acid sequence, 143 residues long: Large ribosomal subunit protein uL11 (143 aa).

This sequence belongs to the universal ribosomal protein uL11 family. Part of the ribosomal stalk of the 50S ribosomal subunit. Interacts with L10 and the large rRNA to form the base of the stalk. L10 forms an elongated spine to which L12 dimers bind in a sequential fashion forming a multimeric L10(L12)X complex. One or more lysine residues are methylated.

Functionally, forms part of the ribosomal stalk which helps the ribosome interact with GTP-bound translation factors. The protein is Large ribosomal subunit protein uL11 of Psychrobacter sp. (strain PRwf-1).